The primary structure comprises 89 residues: Small ribosomal subunit protein uS15 (89 aa).

The protein belongs to the universal ribosomal protein uS15 family. In terms of assembly, part of the 30S ribosomal subunit. Forms a bridge to the 50S subunit in the 70S ribosome, contacting the 23S rRNA.

Functionally, one of the primary rRNA binding proteins, it binds directly to 16S rRNA where it helps nucleate assembly of the platform of the 30S subunit by binding and bridging several RNA helices of the 16S rRNA. Its function is as follows. Forms an intersubunit bridge (bridge B4) with the 23S rRNA of the 50S subunit in the ribosome. The polypeptide is Small ribosomal subunit protein uS15 (Prochlorococcus marinus (strain MIT 9312)).